The primary structure comprises 560 residues: Dihydroxy-acid dehydratase (560 aa).

Residues 1–20 (MGDNLKKRSSMTTDGDNRAP) form a disordered region. Cysteine 52 provides a ligand contact to [2Fe-2S] cluster. Mg(2+) is bound at residue aspartate 84. [2Fe-2S] cluster is bound at residue cysteine 125. Residues aspartate 126 and lysine 127 each coordinate Mg(2+). Lysine 127 bears the N6-carboxylysine mark. Cysteine 197 contributes to the [2Fe-2S] cluster binding site. Glutamate 448 contributes to the Mg(2+) binding site. The active-site Proton acceptor is the serine 474.

The protein belongs to the IlvD/Edd family. Homodimer. [2Fe-2S] cluster serves as cofactor. The cofactor is Mg(2+).

It carries out the reaction (2R)-2,3-dihydroxy-3-methylbutanoate = 3-methyl-2-oxobutanoate + H2O. The catalysed reaction is (2R,3R)-2,3-dihydroxy-3-methylpentanoate = (S)-3-methyl-2-oxopentanoate + H2O. The protein operates within amino-acid biosynthesis; L-isoleucine biosynthesis; L-isoleucine from 2-oxobutanoate: step 3/4. Its pathway is amino-acid biosynthesis; L-valine biosynthesis; L-valine from pyruvate: step 3/4. In terms of biological role, functions in the biosynthesis of branched-chain amino acids. Catalyzes the dehydration of (2R,3R)-2,3-dihydroxy-3-methylpentanoate (2,3-dihydroxy-3-methylvalerate) into 2-oxo-3-methylpentanoate (2-oxo-3-methylvalerate) and of (2R)-2,3-dihydroxy-3-methylbutanoate (2,3-dihydroxyisovalerate) into 2-oxo-3-methylbutanoate (2-oxoisovalerate), the penultimate precursor to L-isoleucine and L-valine, respectively. This is Dihydroxy-acid dehydratase from Leptospira interrogans serogroup Icterohaemorrhagiae serovar Lai (strain 56601).